A 105-amino-acid chain; its full sequence is UPF0145 protein GK1405 (105 aa).

It belongs to the UPF0145 family.

This Geobacillus kaustophilus (strain HTA426) protein is UPF0145 protein GK1405.